Here is a 165-residue protein sequence, read N- to C-terminus: NADPH-dependent 7-cyano-7-deazaguanine reductase (165 aa).

Cys-56 acts as the Thioimide intermediate in catalysis. Asp-63 serves as the catalytic Proton donor. Substrate is bound by residues 78-80 (VES) and 97-98 (HE).

This sequence belongs to the GTP cyclohydrolase I family. QueF type 1 subfamily.

It localises to the cytoplasm. It catalyses the reaction 7-aminomethyl-7-carbaguanine + 2 NADP(+) = 7-cyano-7-deazaguanine + 2 NADPH + 3 H(+). The protein operates within tRNA modification; tRNA-queuosine biosynthesis. Catalyzes the NADPH-dependent reduction of 7-cyano-7-deazaguanine (preQ0) to 7-aminomethyl-7-deazaguanine (preQ1). This is NADPH-dependent 7-cyano-7-deazaguanine reductase from Bacillus pumilus (strain SAFR-032).